We begin with the raw amino-acid sequence, 219 residues long: UPF0502 protein Gmet_0262 (219 aa).

This sequence belongs to the UPF0502 family.

This is UPF0502 protein Gmet_0262 from Geobacter metallireducens (strain ATCC 53774 / DSM 7210 / GS-15).